Consider the following 330-residue polypeptide: Thiosulfate transporter TsuA (330 aa).

At 1–2 (MI) the chain is on the periplasmic side. A helical transmembrane segment spans residues 3–18 (WTGLLVGFLFGIVLQR). At 19 to 36 (GRICFNSAFRDVLLFKDN) the chain is on the cytoplasmic side. The chain crosses the membrane as a helical span at residues 37–59 (YLFKLAVFTLALEMILFVLLSQV). The Periplasmic segment spans residues 60–70 (GLMQMNPKPLN). The helical transmembrane segment at 71–87 (LVGNIIGGFVFGLGMVL) threads the bilayer. The Cytoplasmic portion of the chain corresponds to 88 to 102 (AGGCASGVTYRVGEG). Residues 103–121 (LTTAWFAALFYGLGAYATK) form a helical membrane-spanning segment. The Periplasmic segment spans residues 122-162 (SGAFSWWLSWVGQFKSPLSVEESAYYVKGAGPTISSVLGLN). A helical transmembrane segment spans residues 163–180 (PWIPALVIAALFILWAFG). The Cytoplasmic segment spans residues 181–189 (TKTTSRETK). The chain crosses the membrane as a helical span at residues 190-211 (FNWKIASVCLALVAGLGFITST). Residues 212–239 (LSGRKYGLGITGGWINLFQGFLTNSPLN) lie on the Periplasmic side of the membrane. A helical membrane pass occupies residues 240-258 (WEGLEIVGIILGAGVAAAV). Topologically, residues 259–269 (AGEFKLRMPKN) are cytoplasmic. Residues 270–289 (PVTYLQVGIGGLLMGIGAVT) traverse the membrane as a helical segment. Residues 290-306 (AGGCNIGHFLTGVPQLA) are Periplasmic-facing. The chain crosses the membrane as a helical span at residues 307–326 (LSSWLASIFFILGNWTMAWI). Over 327-330 (LFRR) the chain is Cytoplasmic.

It belongs to the TsuA/YedE (TC 9.B.102) family.

The protein resides in the cell inner membrane. The catalysed reaction is thiosulfate(in) = thiosulfate(out). In terms of biological role, mediates thiosulfate uptake. In Spirochaeta thermophila (strain ATCC 700085 / DSM 6578 / Z-1203), this protein is Thiosulfate transporter TsuA.